A 681-amino-acid polypeptide reads, in one-letter code: Rabphilin-3A (681 aa).

Positions 1-21 (MTDTVVNRWMYPGDGPLQSND) are disordered. Residues 40-157 (QRKQEELTDE…KRSGAWFFKG (118 aa)) enclose the RabBD domain. The FYVE-type zinc finger occupies 88-145 (GDGVNRCILCGEQLGMLGSACVVCEDCKKNVCTKCGVETSNNRPHPVWLCKICLEQRE). Residues Cys-94, Cys-97, Cys-111, Cys-114, Cys-119, Cys-122, Cys-137, and Cys-140 each coordinate Zn(2+). The disordered stretch occupies residues 162-375 (VLPQPMPIKK…EEEANSYDSD (214 aa)). Residues 199 to 208 (ARGDMEDRRP) are compositionally biased toward basic and acidic residues. Arg-223 is subject to Omega-N-methylarginine. Positions 243-252 (RDSEGWDHAH) are enriched in basic and acidic residues. Ser-271 carries the phosphoserine modification. Pro residues predominate over residues 278–296 (APAPVPSPAPPQPVQPGPP). Residues 347–356 (AAPYSQAAPA) show a composition bias toward low complexity. Over residues 362 to 375 (AEEEEEEANSYDSD) the composition is skewed to acidic residues. The 123-residue stretch at 379–501 (TLGALEFSLL…KANQRKNFNI (123 aa)) folds into the C2 1 domain. Ca(2+) contacts are provided by Met-409, Asp-410, Asp-416, Asp-471, Glu-472, Asp-473, Glu-479, Glu-526, Asp-568, Asp-574, Asp-628, Tyr-629, Asp-630, and Asp-636. Positions 537 to 670 (ERGKILVSLM…NKDKKIERWH (134 aa)) constitute a C2 2 domain. Ser-679 and Ser-680 each carry phosphoserine.

In terms of assembly, interacts with RAB3B, RAB3C, RAB3D, RAB8A, RAB27A and RAB27B. Interacts with RAB3A; this interaction recruits RPH3A to synaptic vesicules. Interacts (via C2B domain) with SNAP25. Interacts with deubiquitinating enzyme CAND1; this interaction results in the deubiquitination of RPH3A. Interacts with GRIN2A and DLG4; this ternary complex regulates NMDA receptor composition at postsynaptic membranes. Interacts with SNCA. Requires Ca(2+) as cofactor. In terms of processing, ubiquitinated. Deubiquitinated by CAND1 to prevent its degradation. As to expression, specifically expressed in brain.

It is found in the cytoplasmic vesicle. It localises to the secretory vesicle. Its subcellular location is the synaptic vesicle membrane. The protein localises to the cell projection. The protein resides in the dendritic spine. It is found in the postsynaptic cell membrane. It localises to the membrane. Functionally, plays an essential role in docking and fusion steps of regulated exocytosis. At the presynaptic level, RPH3A is recruited by RAB3A to the synaptic vesicle membrane in a GTP-dependent manner where it modulates synaptic vesicle trafficking and calcium-triggered neurotransmitter release. In the post-synaptic compartment, forms a ternary complex with GRIN2A and DLG4 and regulates NMDA receptor stability. Also plays a role in the exocytosis of arginine vasopressin hormone. This is Rabphilin-3A (Rph3a) from Mus musculus (Mouse).